Consider the following 264-residue polypeptide: uncharacterized protein (264 aa).

The tract at residues 1–20 (MENIEKKCQPETINEDNNDE) is disordered.

It belongs to the mimivirus R73/L269/L862 family.

This is an uncharacterized protein from Acanthamoeba polyphaga mimivirus (APMV).